Here is a 143-residue protein sequence, read N- to C-terminus: Nucleoside diphosphate kinase (143 aa).

Positions 11, 59, 87, 93, 104, and 114 each coordinate ATP. Histidine 117 serves as the catalytic Pros-phosphohistidine intermediate.

This sequence belongs to the NDK family. As to quaternary structure, homotetramer. Mg(2+) is required as a cofactor.

It is found in the cytoplasm. The enzyme catalyses a 2'-deoxyribonucleoside 5'-diphosphate + ATP = a 2'-deoxyribonucleoside 5'-triphosphate + ADP. The catalysed reaction is a ribonucleoside 5'-diphosphate + ATP = a ribonucleoside 5'-triphosphate + ADP. Major role in the synthesis of nucleoside triphosphates other than ATP. The ATP gamma phosphate is transferred to the NDP beta phosphate via a ping-pong mechanism, using a phosphorylated active-site intermediate. The polypeptide is Nucleoside diphosphate kinase (Shewanella oneidensis (strain ATCC 700550 / JCM 31522 / CIP 106686 / LMG 19005 / NCIMB 14063 / MR-1)).